The sequence spans 472 residues: Eukaryotic translation initiation factor 2 subunit 3 (472 aa).

In terms of domain architecture, tr-type G spans 39-247; it reads QATINIGTIG…YIVNKIPVPV (209 aa). Positions 48 to 55 are G1; that stretch reads GHVAHGKS. GTP is bound at residue 51 to 56; it reads AHGKST. Positions 76–80 are G2; the sequence is NITIK. The tract at residues 134–137 is G3; sequence DCPG. Residues 190 to 193 and 225 to 227 each bind GTP; these read NKID and SAQ. The G4 stretch occupies residues 190-193; that stretch reads NKID. Residues 225–227 form a G5 region; the sequence is SAQ. Residues 457–469 form an interacts with cdc123 region; sequence GQIRRGVTITPTV.

The protein belongs to the TRAFAC class translation factor GTPase superfamily. Classic translation factor GTPase family. EIF2G subfamily. Eukaryotic translation initiation factor 2 eIF2 is a heterotrimeric complex composed of an alpha (EIF2S1), a beta (EIF2S2) and a gamma (EIF2S3) chain. eIF2 is member of the 43S pre-initiation complex (43S PIC).

It is found in the cytoplasm. The protein resides in the cytosol. The catalysed reaction is GTP + H2O = GDP + phosphate + H(+). Member of the eIF2 complex that functions in the early steps of protein synthesis by forming a ternary complex with GTP and initiator tRNA. This complex binds to a 40S ribosomal subunit, followed by mRNA binding to form the 43S pre-initiation complex (43S PIC). Junction of the 60S ribosomal subunit to form the 80S initiation complex is preceded by hydrolysis of the GTP bound to eIF2 and release of an eIF2-GDP binary complex. In order for eIF2 to recycle and catalyze another round of initiation, the GDP bound to eIF2 must exchange with GTP by way of a reaction catalyzed by eIF-2B. The protein is Eukaryotic translation initiation factor 2 subunit 3 of Danio rerio (Zebrafish).